A 194-amino-acid polypeptide reads, in one-letter code: Erythropoietin (194 aa).

The first 27 residues, 1–27 (MGARDCTPLLLLLLSFLLFPLGLPVLG), serve as a signal peptide directing secretion. 2 disulfides stabilise this stretch: Cys34–Cys189 and Cys56–Cys60. N-linked (GlcNAc...) asparagine glycosylation is present at Asn51. Residues Asn65 and Asn110 are each glycosylated (N-linked (GlcNAc...) asparagine).

The protein belongs to the EPO/TPO family. In terms of tissue distribution, produced by kidney or liver of adult mammals and by liver of fetal or neonatal mammals.

It is found in the secreted. Functionally, hormone involved in the regulation of erythrocyte proliferation and differentiation and the maintenance of a physiological level of circulating erythrocyte mass. Binds to EPOR leading to EPOR dimerization and JAK2 activation thereby activating specific downstream effectors, including STAT1 and STAT3. In Ovis aries (Sheep), this protein is Erythropoietin (EPO).